The primary structure comprises 892 residues: MAGVNEIRSKYLEFFRAQGHEVVASGPLVPNNDPTLLFTNAGMVPFKNVFTGQETRPYKRAASSQKCVRAGGKHNDLDNVGYTARHHTFFEMLGNFSFGDYYKAEAIEFAWDLITKELALPESRLMVTIYEDDDEAHGLWKKITGLSDDKIVRLGAKSNFWQMGDTGPCGPNSEIFYDHGDKIPGGPPGSPDEDGDRFIEIWNLVFMQYEQHEDGSRTRLPKPSIDTGMGLERIAAVLQGTHDNYSTDLMRSLIVASAEASKSDPDGPHAVSHRVIADHLRSSSFLLADGVMPSNEGRGYVLRRIMRRAMRHAQLVGVAEPLMWRLVPALVRQMGDAYPELRRAEALVTETLRLEETRFRETLTRGLKLLDEEIESLGGKGVLAGEVAFKLYDTYGFPLDLTQDALRSRGMSVDQTGFDEAMAKQRQDARAAWSGSGEKATEAVWFELRDKVGATEFLGYESEIAEGKVVALLVDGQPVDKVEAGTDAALITNQTPFYAESGGQVGDTGIVFSADGAEFPVIDTMKKLGALHVHIGKLARGTLKLGDIVEMKVDKSLRDATRANHSATHLLHEALRRVLGDHVTQKGSMVGPERLRFDFSHPKPMTPEEISEVETIVNRVIRQNAEVTTRLMTPEDAIAAGALALFGEKYGEEVRVLAMGLDDENPNGTYSVELCGGTHVRRVGDIAIFKIVSESAVASGIRRIEALTGEGARAYLVAQDRIAKEAASALRISTEDLPARVVSLMEERKRLERELAQAKKQLAMSGGGGSGGQESPVQEFGGVKLIARKLEGVNPKDLRGLIDESKKQLGSGVVVLVAISEDGKGAIAVGVTDDLTSRYNAVELVKAGAAAMGGKGGGGRPDMAQAGGPEAEKADAALDAVKAAVGELAGAA.

Residues H565, H569, C675, and H679 each coordinate Zn(2+). The segment at 852–871 is disordered; that stretch reads MGGKGGGGRPDMAQAGGPEA.

It belongs to the class-II aminoacyl-tRNA synthetase family. Requires Zn(2+) as cofactor.

The protein localises to the cytoplasm. It carries out the reaction tRNA(Ala) + L-alanine + ATP = L-alanyl-tRNA(Ala) + AMP + diphosphate. Catalyzes the attachment of alanine to tRNA(Ala) in a two-step reaction: alanine is first activated by ATP to form Ala-AMP and then transferred to the acceptor end of tRNA(Ala). Also edits incorrectly charged Ser-tRNA(Ala) and Gly-tRNA(Ala) via its editing domain. The polypeptide is Alanine--tRNA ligase (Parvibaculum lavamentivorans (strain DS-1 / DSM 13023 / NCIMB 13966)).